Consider the following 676-residue polypeptide: Methionine--tRNA ligase (676 aa).

The 'HIGH' region motif lies at 15–25; it reads PYANGPIHLGH. Zn(2+) is bound by residues C146, C149, C159, and C162. A 'KMSKS' region motif is present at residues 332–336; sequence KMSKS. K335 is an ATP binding site. A tRNA-binding domain is found at 575–676; that stretch reads DFAKIDLRIA…EGAQPGMRVK (102 aa).

Belongs to the class-I aminoacyl-tRNA synthetase family. MetG type 1 subfamily. In terms of assembly, homodimer. Zn(2+) serves as cofactor.

The protein resides in the cytoplasm. The enzyme catalyses tRNA(Met) + L-methionine + ATP = L-methionyl-tRNA(Met) + AMP + diphosphate. Is required not only for elongation of protein synthesis but also for the initiation of all mRNA translation through initiator tRNA(fMet) aminoacylation. The polypeptide is Methionine--tRNA ligase (Shewanella sp. (strain MR-4)).